A 174-amino-acid chain; its full sequence is Small ribosomal subunit protein uS5 (174 aa).

The region spanning 18-81 (WQERVIQIRR…ADGKKHLIDI (64 aa)) is the S5 DRBM domain.

The protein belongs to the universal ribosomal protein uS5 family. As to quaternary structure, part of the 30S ribosomal subunit. Contacts proteins S4 and S8.

With S4 and S12 plays an important role in translational accuracy. In terms of biological role, located at the back of the 30S subunit body where it stabilizes the conformation of the head with respect to the body. This Trichormus variabilis (strain ATCC 29413 / PCC 7937) (Anabaena variabilis) protein is Small ribosomal subunit protein uS5.